The sequence spans 420 residues: Serine hydroxymethyltransferase (420 aa).

(6S)-5,6,7,8-tetrahydrofolate contacts are provided by residues Leu-121 and 125 to 127 (GHL). Lys-229 is subject to N6-(pyridoxal phosphate)lysine.

This sequence belongs to the SHMT family. Homodimer. It depends on pyridoxal 5'-phosphate as a cofactor.

The protein resides in the cytoplasm. The catalysed reaction is (6R)-5,10-methylene-5,6,7,8-tetrahydrofolate + glycine + H2O = (6S)-5,6,7,8-tetrahydrofolate + L-serine. It functions in the pathway one-carbon metabolism; tetrahydrofolate interconversion. The protein operates within amino-acid biosynthesis; glycine biosynthesis; glycine from L-serine: step 1/1. Functionally, catalyzes the reversible interconversion of serine and glycine with tetrahydrofolate (THF) serving as the one-carbon carrier. This reaction serves as the major source of one-carbon groups required for the biosynthesis of purines, thymidylate, methionine, and other important biomolecules. Also exhibits THF-independent aldolase activity toward beta-hydroxyamino acids, producing glycine and aldehydes, via a retro-aldol mechanism. In Streptomyces coelicolor (strain ATCC BAA-471 / A3(2) / M145), this protein is Serine hydroxymethyltransferase.